A 93-amino-acid chain; its full sequence is SH3 domain-binding glutamic acid-rich-like protein 3 (93 aa).

At Ser2 the chain carries N-acetylserine. The O-linked (GalNAc...) serine glycan is linked to Ser2. In terms of domain architecture, Glutaredoxin spans Ser2 to Ala93. O-linked (GalNAc...) threonine glycans are attached at residues Thr9 and Thr12.

Belongs to the SH3BGR family. As to quaternary structure, homodimer. Interacts with MYO1C (via its IQ motifs); the interaction is dependent on calcium and takes place at membrane ruffles. May be glycosylated.

The protein resides in the cytoplasm. The protein localises to the cytosol. Its subcellular location is the cell projection. It localises to the ruffle membrane. It is found in the nucleus. Could act as a modulator of glutaredoxin biological activity. May play a role in cytoskeleton organization. This is SH3 domain-binding glutamic acid-rich-like protein 3 (SH3BGRL3) from Pongo abelii (Sumatran orangutan).